A 420-amino-acid chain; its full sequence is uncharacterized protein (420 aa).

Residues glycine 79–serine 420 enclose the YcaO domain.

This is an uncharacterized protein from Rhizobium leguminosarum bv. trifolii.